The sequence spans 194 residues: Peptidyl-tRNA hydrolase (194 aa).

Tyr-17 contacts tRNA. His-22 acts as the Proton acceptor in catalysis. Residues Tyr-68, Asn-70, and Asn-115 each contribute to the tRNA site.

It belongs to the PTH family. As to quaternary structure, monomer.

The protein resides in the cytoplasm. It catalyses the reaction an N-acyl-L-alpha-aminoacyl-tRNA + H2O = an N-acyl-L-amino acid + a tRNA + H(+). Its function is as follows. Hydrolyzes ribosome-free peptidyl-tRNAs (with 1 or more amino acids incorporated), which drop off the ribosome during protein synthesis, or as a result of ribosome stalling. Catalyzes the release of premature peptidyl moieties from peptidyl-tRNA molecules trapped in stalled 50S ribosomal subunits, and thus maintains levels of free tRNAs and 50S ribosomes. The polypeptide is Peptidyl-tRNA hydrolase (Pseudoalteromonas atlantica (strain T6c / ATCC BAA-1087)).